The primary structure comprises 221 residues: GTP cyclohydrolase 1 (221 aa).

Zn(2+) contacts are provided by C109, H112, and C180.

The protein belongs to the GTP cyclohydrolase I family. As to quaternary structure, toroid-shaped homodecamer, composed of two pentamers of five dimers.

The enzyme catalyses GTP + H2O = 7,8-dihydroneopterin 3'-triphosphate + formate + H(+). Its pathway is cofactor biosynthesis; 7,8-dihydroneopterin triphosphate biosynthesis; 7,8-dihydroneopterin triphosphate from GTP: step 1/1. This is GTP cyclohydrolase 1 from Serratia proteamaculans (strain 568).